The primary structure comprises 270 residues: Urease accessory protein UreD (270 aa).

This sequence belongs to the UreD family. UreD, UreF and UreG form a complex that acts as a GTP-hydrolysis-dependent molecular chaperone, activating the urease apoprotein by helping to assemble the nickel containing metallocenter of UreC. The UreE protein probably delivers the nickel.

Its subcellular location is the cytoplasm. Required for maturation of urease via the functional incorporation of the urease nickel metallocenter. This Actinobacillus pleuropneumoniae serotype 3 (strain JL03) protein is Urease accessory protein UreD.